We begin with the raw amino-acid sequence, 172 residues long: uncharacterized protein (172 aa).

The PfpI endopeptidase domain maps to K3–N171.

The protein belongs to the peptidase C56 family.

This is an uncharacterized protein from Staphylococcus saprophyticus subsp. saprophyticus (strain ATCC 15305 / DSM 20229 / NCIMB 8711 / NCTC 7292 / S-41).